The chain runs to 260 residues: Pectate lyase H (260 aa).

A signal peptide spans 1 to 17 (MFIKNGLLLSLATSVLA).

This sequence belongs to the polysaccharide lyase 3 family. Ca(2+) serves as cofactor.

Its subcellular location is the secreted. It catalyses the reaction Eliminative cleavage of (1-&gt;4)-alpha-D-galacturonan to give oligosaccharides with 4-deoxy-alpha-D-galact-4-enuronosyl groups at their non-reducing ends.. Pectinolytic enzyme consist of four classes of enzymes: pectin lyase, polygalacturonase, pectin methylesterase and rhamnogalacturonase. Among pectinolytic enzymes, pectin lyase is the most important in depolymerization of pectin, since it cleaves internal glycosidic bonds of highly methylated pectins. Favors pectate, the anion, over pectin, the methyl ester. The protein is Pectate lyase H (plyH) of Emericella nidulans (strain FGSC A4 / ATCC 38163 / CBS 112.46 / NRRL 194 / M139) (Aspergillus nidulans).